Consider the following 461-residue polypeptide: ATP synthase subunit beta (461 aa).

Position 151-158 (151-158 (GGAGVGKT)) interacts with ATP.

Belongs to the ATPase alpha/beta chains family. As to quaternary structure, F-type ATPases have 2 components, CF(1) - the catalytic core - and CF(0) - the membrane proton channel. CF(1) has five subunits: alpha(3), beta(3), gamma(1), delta(1), epsilon(1). CF(0) has three main subunits: a(1), b(2) and c(9-12). The alpha and beta chains form an alternating ring which encloses part of the gamma chain. CF(1) is attached to CF(0) by a central stalk formed by the gamma and epsilon chains, while a peripheral stalk is formed by the delta and b chains.

The protein resides in the cell inner membrane. The catalysed reaction is ATP + H2O + 4 H(+)(in) = ADP + phosphate + 5 H(+)(out). In terms of biological role, produces ATP from ADP in the presence of a proton gradient across the membrane. The catalytic sites are hosted primarily by the beta subunits. This Coxiella burnetii (strain RSA 331 / Henzerling II) protein is ATP synthase subunit beta.